Here is a 408-residue protein sequence, read N- to C-terminus: uncharacterized protein (408 aa).

12 helical membrane-spanning segments follow: residues 9–29 (WFVLLFTFVFAIGMNSFRNSF), 49–69 (VSVSIFMITTGIVQFFVGFFI), 77–97 (IMALGAVCISASFLVLPYSPN), 100–120 (VFSAIYGVLGGIGYSCAVGVT), 135–155 (LALAILTNANSAGLLLLSPIW), 167–187 (TYTILGIVMAAVLLPLLVFGM), 216–236 (LIHILYFGVFTCGFTMGIIDA), 252–272 (GMMAAFGAFIIIGGLLAGWLS), 283–303 (SILFFIRLLSLICLLIPILGI), 308–328 (LWYFGFILLFGLSYTGVIPLT), 340–360 (LIGSLLGINFFIHQVAGALSV), and 373–393 (YLLIVAVCIVFVGLSAVIELV).

Belongs to the major facilitator superfamily.

Its subcellular location is the cell membrane. This is an uncharacterized protein from Bacillus subtilis (strain 168).